Here is a 474-residue protein sequence, read N- to C-terminus: Protein FAM161A (474 aa).

Disordered stretches follow at residues 78-126 (SSSS…PGEI), 185-210 (QKRR…DDAE), and 308-364 (REEL…DQGL). Residues 188 to 250 (REKASDAQET…KKTRERSKAA (63 aa)) are a coiled coil. Residues 274–454 (KLRELCRAKK…PTASSRGREQ (181 aa)) form a required for interaction with CFAP418 region. Over residues 325–335 (LQSSPWPSHST) the composition is skewed to polar residues. Residues Lys-397 and Lys-413 each participate in a glycyl lysine isopeptide (Lys-Gly) (interchain with G-Cter in SUMO2) cross-link. The interval 412–474 (LKETRRPNPS…KELARIGGAR (63 aa)) is disordered. A compositionally biased stretch (basic residues) spans 422 to 431 (PRHKSPRRSA). The segment covering 450–468 (RGREQAIRRSEKARMKELA) has biased composition (basic and acidic residues).

It belongs to the FAM161 family. As to quaternary structure, interacts (via central region) with CFAP418 (via N-terminus); the interaction is direct. Interacts (via C-terminus) with microtubules. Interacts with LCA5. Interacts with CEP290. Interacts with SDCCAG8. Interacts with FAM161B. Interacts with POC1B. Interacts with CEP78. Forms a microtubule-associated complex with POC5, CETN2 and POC1B. Interacts with CCDC15. Expressed in the retina and kidney.

The protein localises to the cytoplasm. Its subcellular location is the cytoskeleton. The protein resides in the cilium basal body. It is found in the cell projection. It localises to the cilium. The protein localises to the microtubule organizing center. Its subcellular location is the centrosome. The protein resides in the centriole. Involved in ciliogenesis. This is Protein FAM161A from Rattus norvegicus (Rat).